The sequence spans 37 residues: Large ribosomal subunit protein bL36c (37 aa).

Belongs to the bacterial ribosomal protein bL36 family.

The protein resides in the plastid. The protein localises to the chloroplast. This Marchantia polymorpha (Common liverwort) protein is Large ribosomal subunit protein bL36c (rpl36).